The chain runs to 197 residues: MPMKSLRNDHGTLKAMIGSDFNELTIAAKNLATHAFTLTGLGFGTSVLEWVASIAAIYLLVLDRTNWKTNMLTSLLIPYIFFSLPSLIFGIFRGEIGKWIAFVAVVVQLFFPKHAREYLELPVALVLLAVVAPNLIAGTFRDSWIGLAICLGIGCYLLQEHIRASGGFRNAFTKANGISNTVGIICLVVFPVWALIF.

The Extracellular portion of the chain corresponds to 1-40; sequence MPMKSLRNDHGTLKAMIGSDFNELTIAAKNLATHAFTLTG. Residues 41–61 form a helical membrane-spanning segment; that stretch reads LGFGTSVLEWVASIAAIYLLV. The Cytoplasmic segment spans residues 62–71; that stretch reads LDRTNWKTNM. Residues 72-92 traverse the membrane as a helical segment; sequence LTSLLIPYIFFSLPSLIFGIF. Over 93-94 the chain is Extracellular; that stretch reads RG. A helical transmembrane segment spans residues 95 to 115; the sequence is EIGKWIAFVAVVVQLFFPKHA. Residues 116 to 117 are Cytoplasmic-facing; that stretch reads RE. A helical transmembrane segment spans residues 118–138; that stretch reads YLELPVALVLLAVVAPNLIAG. Residues 139–141 lie on the Extracellular side of the membrane; it reads TFR. Residues 142–162 traverse the membrane as a helical segment; it reads DSWIGLAICLGIGCYLLQEHI. Residues 163–176 lie on the Cytoplasmic side of the membrane; that stretch reads RASGGFRNAFTKAN. A helical membrane pass occupies residues 177 to 197; that stretch reads GISNTVGIICLVVFPVWALIF.

Belongs to the Cold-regulated 413 protein family.

Its subcellular location is the membrane. This is Cold-regulated 413 plasma membrane protein 1 (COR413PM1) from Arabidopsis thaliana (Mouse-ear cress).